The sequence spans 492 residues: Pyrin and HIN domain-containing protein 1 (492 aa).

The Pyrin domain occupies 1 to 88 (MANNYKKIVL…AETLKREKLK (88 aa)). Disordered stretches follow at residues 106-199 (KTKQ…KPLA) and 400-492 (KNTN…PAVP). The segment covering 142-159 (PSEEETGTKRSKMSKEQT) has biased composition (basic and acidic residues). Over residues 160–173 (RPSCSAGASTSTAM) the composition is skewed to polar residues. Residues 181–194 (TSSSAPPNTSSTES) show a composition bias toward low complexity. The 201-residue stretch at 199–399 (ANRHATASKN…SEMHSFIQIQ (201 aa)) folds into the HIN-200 domain. Composition is skewed to polar residues over residues 416 to 432 (QEQS…TTLP) and 460 to 492 (GAQS…PAVP).

The protein belongs to the HIN-200 family. Interacts with MDM2. As to expression, expressed in spleen, lymph node and peripheral blood leukocytes, and at lower levels in thymus, bone marrow and fetal liver. Down-regulated in breast tumors.

It localises to the nucleus. The protein localises to the nucleoplasm. It is found in the nucleus speckle. Its function is as follows. Major mediator of the tumor suppressor activity of IFN in breast cancer cells. Promotes ubiquitination and subsequent degradation of MDM2, which leads to p53/TP53 stabilization. Promotes ubiquitination and subsequent degradation of HDAC1, which in turn enhances maspin expression, and impairs invasive activity of cancer cells. This is Pyrin and HIN domain-containing protein 1 (PYHIN1) from Homo sapiens (Human).